The sequence spans 285 residues: Bifunctional protein FolD (285 aa).

NADP(+) contacts are provided by residues 166–168 (GAS) and Ile-232.

It belongs to the tetrahydrofolate dehydrogenase/cyclohydrolase family. As to quaternary structure, homodimer.

The catalysed reaction is (6R)-5,10-methylene-5,6,7,8-tetrahydrofolate + NADP(+) = (6R)-5,10-methenyltetrahydrofolate + NADPH. It carries out the reaction (6R)-5,10-methenyltetrahydrofolate + H2O = (6R)-10-formyltetrahydrofolate + H(+). The protein operates within one-carbon metabolism; tetrahydrofolate interconversion. Its function is as follows. Catalyzes the oxidation of 5,10-methylenetetrahydrofolate to 5,10-methenyltetrahydrofolate and then the hydrolysis of 5,10-methenyltetrahydrofolate to 10-formyltetrahydrofolate. The protein is Bifunctional protein FolD of Aliivibrio salmonicida (strain LFI1238) (Vibrio salmonicida (strain LFI1238)).